The chain runs to 162 residues: RNA pyrophosphohydrolase (162 aa).

The Nudix hydrolase domain occupies 11 to 155 (PYRPCVGIVL…KRAVYEEVVA (145 aa)). Residues 45-66 (GGIDEGEKPREAALRELWEETG) carry the Nudix box motif.

Belongs to the Nudix hydrolase family. RppH subfamily. A divalent metal cation is required as a cofactor.

In terms of biological role, accelerates the degradation of transcripts by removing pyrophosphate from the 5'-end of triphosphorylated RNA, leading to a more labile monophosphorylated state that can stimulate subsequent ribonuclease cleavage. This chain is RNA pyrophosphohydrolase, found in Cereibacter sphaeroides (strain ATCC 17029 / ATH 2.4.9) (Rhodobacter sphaeroides).